The chain runs to 280 residues: UPF0273 protein SSO1861 (280 aa).

The 245-residue stretch at 2 to 246 folds into the KaiC domain; sequence KRVKTYIPGL…YLKISNWSVS (245 aa). An ATP-binding site is contributed by 29–36; the sequence is GGPGTGKS.

Belongs to the UPF0273 family.

The polypeptide is UPF0273 protein SSO1861 (Saccharolobus solfataricus (strain ATCC 35092 / DSM 1617 / JCM 11322 / P2) (Sulfolobus solfataricus)).